A 164-amino-acid polypeptide reads, in one-letter code: Large ribosomal subunit protein bL9 (164 aa).

The protein belongs to the bacterial ribosomal protein bL9 family.

In terms of biological role, binds to the 23S rRNA. This is Large ribosomal subunit protein bL9 from Borrelia duttonii (strain Ly).